Reading from the N-terminus, the 103-residue chain is Small ribosomal subunit protein uS10 (103 aa).

The protein belongs to the universal ribosomal protein uS10 family. As to quaternary structure, part of the 30S ribosomal subunit.

Its function is as follows. Involved in the binding of tRNA to the ribosomes. The protein is Small ribosomal subunit protein uS10 of Methylibium petroleiphilum (strain ATCC BAA-1232 / LMG 22953 / PM1).